The sequence spans 748 residues: Protein REPRESSOR OF SILENCING 3 (748 aa).

Residues 10-86 enclose the RRM domain; it reads VRLHVGGLGE…GRLRLEKAKE (77 aa). Disordered regions lie at residues 244-318, 350-531, 579-600, and 729-748; these read KSIL…QSID, GSSK…VSDT, VDEE…GGSS, and EWAK…NSEE. Positions 266-288 are enriched in polar residues; that stretch reads THPSKNRQTISLEETGRQESSQA. The span at 294–314 shows a compositional bias: basic and acidic residues; sequence KPSEVVPDKSSDEPSRTKDLE. A compositionally biased stretch (basic residues) spans 373 to 382; that stretch reads LKKKTKRKRV. 3 stretches are compositionally biased toward acidic residues: residues 403–416, 439–472, and 491–518; these read DTMA…DSDA, DDSD…DAVE, and ESDD…DVGS. Polar residues predominate over residues 520–531; the sequence is DSGSLADTVSDT.

In terms of tissue distribution, ubiquitously expressed.

It localises to the nucleus. The protein localises to the nucleolus. Its subcellular location is the nucleoplasm. In terms of biological role, RNA-binding protein required for DNA demethylation and to eluviate siRNA-mediated transcriptional gene silencing (TGS), probably by guiding ROS1. Can bind specifically single stranded G-rich RNAs of 21-, 24- or 26-nt corresponding to promoter sequence of target genes; this interaction directs demethylation of target sequences. The protein is Protein REPRESSOR OF SILENCING 3 of Arabidopsis thaliana (Mouse-ear cress).